The primary structure comprises 412 residues: Chorismate synthase (412 aa).

2 residues coordinate NADP(+): arginine 40 and arginine 46. Residues 135 to 137 (RAS), 256 to 257 (QA), glycine 300, 315 to 319 (KPIST), and arginine 341 each bind FMN. A compositionally biased stretch (basic and acidic residues) spans 391–404 (QREPRQESSDEQPA). Positions 391–412 (QREPRQESSDEQPARRAANTAG) are disordered.

Belongs to the chorismate synthase family. In terms of assembly, homotetramer. Requires FMNH2 as cofactor.

It catalyses the reaction 5-O-(1-carboxyvinyl)-3-phosphoshikimate = chorismate + phosphate. Its pathway is metabolic intermediate biosynthesis; chorismate biosynthesis; chorismate from D-erythrose 4-phosphate and phosphoenolpyruvate: step 7/7. Its function is as follows. Catalyzes the anti-1,4-elimination of the C-3 phosphate and the C-6 proR hydrogen from 5-enolpyruvylshikimate-3-phosphate (EPSP) to yield chorismate, which is the branch point compound that serves as the starting substrate for the three terminal pathways of aromatic amino acid biosynthesis. This reaction introduces a second double bond into the aromatic ring system. The sequence is that of Chorismate synthase from Mycobacteroides abscessus (strain ATCC 19977 / DSM 44196 / CCUG 20993 / CIP 104536 / JCM 13569 / NCTC 13031 / TMC 1543 / L948) (Mycobacterium abscessus).